The chain runs to 347 residues: Ataxin-7-like protein 3 (347 aa).

Residues 84–105 (CVCPNCSRSIAASRFAPHLEKC) form an SGF11-type zinc finger. Over residues 116–125 (ANRRIANSNN) the composition is skewed to low complexity. The disordered stretch occupies residues 116-184 (ANRRIANSNN…GELSNSDPFK (69 aa)). Residues Ser129 and Ser131 each carry the phosphoserine modification. Acidic residues predominate over residues 132–141 (DQEDNDDIND). In terms of domain architecture, SCA7 spans 196 to 263 (LGPEELRSLL…SLDNDSFDMT (68 aa)). The span at 275 to 288 (DGSSDLSPSDSGSS) shows a compositional bias: low complexity. Residues 275-347 (DGSSDLSPSD…PTPSIYDDIN (73 aa)) form a disordered region. Phosphoserine occurs at positions 278, 281, and 326.

It belongs to the SGF11 family. Component of some SAGA transcription coactivator-HAT complexes, at least composed of ATXN7, ATXN7L3, ENY2, GCN5L2, SUPT3H, TAF10, TRRAP and USP22. Within the SAGA complex, ENY2, ATXN7, ATXN7L3, and USP22 form an additional subcomplex of SAGA called the DUB module (deubiquitination module). Interacts directly with ENY2 and USP22.

The protein localises to the nucleus. Component of the transcription regulatory histone acetylation (HAT) complex SAGA, a multiprotein complex that activates transcription by remodeling chromatin and mediating histone acetylation and deubiquitination. Within the SAGA complex, participates in a subcomplex that specifically deubiquitinates both histones H2A and H2B. The SAGA complex is recruited to specific gene promoters by activators such as MYC, where it is required for transcription. Required for nuclear receptor-mediated transactivation. Within the complex, it is required to recruit USP22 and ENY2 into the SAGA complex. Regulates H2B monoubiquitination (H2Bub1) levels. Affects subcellular distribution of ENY2, USP22 and ATXN7L3B. The protein is Ataxin-7-like protein 3 of Homo sapiens (Human).